The sequence spans 455 residues: L-serine dehydratase (455 aa).

The protein belongs to the iron-sulfur dependent L-serine dehydratase family. It depends on [4Fe-4S] cluster as a cofactor.

It catalyses the reaction L-serine = pyruvate + NH4(+). The protein operates within carbohydrate biosynthesis; gluconeogenesis. In Streptomyces coelicolor (strain ATCC BAA-471 / A3(2) / M145), this protein is L-serine dehydratase (sdaA).